The primary structure comprises 128 residues: Large-conductance mechanosensitive channel (128 aa).

2 helical membrane passes run 10–30 and 76–96; these read FAMR…GAFG and GMFI…FLMI.

The protein belongs to the MscL family. As to quaternary structure, homopentamer.

Its subcellular location is the cell inner membrane. Functionally, channel that opens in response to stretch forces in the membrane lipid bilayer. May participate in the regulation of osmotic pressure changes within the cell. In Actinobacillus succinogenes (strain ATCC 55618 / DSM 22257 / CCUG 43843 / 130Z), this protein is Large-conductance mechanosensitive channel.